The chain runs to 71 residues: Hainantoxin-X-2 (71 aa).

Residues 1–26 form the signal peptide; that stretch reads MKTAIFTVVLALAVFAVLCLVVSTHA. Positions 27–43 are excised as a propeptide; it reads ERHSKTDMEDSPMIQER. Intrachain disulfides connect C52–C65 and C61–C70.

It belongs to the neurotoxin 36 family. 02 subfamily. Expressed by the venom gland.

Its subcellular location is the secreted. Reversibly blocks N-type calcium channels (Cav2.2/CACNA1B) in rat dorsal root ganglion cells. Elicits no toxic symptoms in either vertebrates or invertebrates during a period of 48 hours post-injection, when it was assayed in vivo by direct injection into mice and cockroaches. This chain is Hainantoxin-X-2, found in Cyriopagopus hainanus (Chinese bird spider).